The chain runs to 375 residues: Chaperone protein DnaJ (375 aa).

The region spanning 4 to 68 (DYYEILGVSR…ETRARYDRFG (65 aa)) is the J domain. The CR-type zinc finger occupies 134–216 (GGEKEIRIRH…CGGSGRKQET (83 aa)). Residues cysteine 147, cysteine 150, cysteine 164, cysteine 167, cysteine 190, cysteine 193, cysteine 204, and cysteine 207 each coordinate Zn(2+). 4 CXXCXGXG motif repeats span residues 147 to 154 (CQVCEGSG), 164 to 171 (CSTCSGSG), 190 to 197 (CPTCNGSG), and 204 to 211 (CEACGGSG).

This sequence belongs to the DnaJ family. Homodimer. Zn(2+) serves as cofactor.

It localises to the cytoplasm. Its function is as follows. Participates actively in the response to hyperosmotic and heat shock by preventing the aggregation of stress-denatured proteins and by disaggregating proteins, also in an autonomous, DnaK-independent fashion. Unfolded proteins bind initially to DnaJ; upon interaction with the DnaJ-bound protein, DnaK hydrolyzes its bound ATP, resulting in the formation of a stable complex. GrpE releases ADP from DnaK; ATP binding to DnaK triggers the release of the substrate protein, thus completing the reaction cycle. Several rounds of ATP-dependent interactions between DnaJ, DnaK and GrpE are required for fully efficient folding. Also involved, together with DnaK and GrpE, in the DNA replication of plasmids through activation of initiation proteins. The chain is Chaperone protein DnaJ from Gloeothece citriformis (strain PCC 7424) (Cyanothece sp. (strain PCC 7424)).